The primary structure comprises 703 residues: 1,4-alpha-glucan-branching enzyme (703 aa).

2 residues coordinate (1,4-alpha-D-glucosyl)n: Trp93 and Lys130. Asp355 acts as the Nucleophile in catalysis. The Proton donor role is filled by Glu415.

Belongs to the glycosyl hydrolase 13 family. GlgB subfamily.

Its subcellular location is the cytoplasm. The catalysed reaction is Transfers a segment of a (1-&gt;4)-alpha-D-glucan chain to a primary hydroxy group in a similar glucan chain.. Its pathway is glycan biosynthesis; glycogen biosynthesis. In terms of biological role, glycogen-branching enzyme participates in the glycogen biosynthetic process along with glycogenin and glycogen synthase. Generates alpha-1,6-glucosidic branches from alpha-1,4-linked glucose chains, to increase solubility of the glycogen polymer. The sequence is that of 1,4-alpha-glucan-branching enzyme (GLC3) from Eremothecium gossypii (strain ATCC 10895 / CBS 109.51 / FGSC 9923 / NRRL Y-1056) (Yeast).